Consider the following 351-residue polypeptide: C-X-C chemokine receptor type 1 (351 aa).

Over 1-46 (MSNITDPQMWDYDGDPNFTGMPPIDEDYRPCRLETETLNKYVVIVT) the chain is Extracellular. Asparagine 3 is a glycosylation site (N-linked (GlcNAc...) asparagine). Residues 47-67 (YALVFLLSLLGNSLVMLVILY) form a helical membrane-spanning segment. Topologically, residues 68-76 (SRVGRSVTD) are cytoplasmic. A helical transmembrane segment spans residues 77-97 (VYLLNLALADLLFALTLPIWA). The Extracellular segment spans residues 98-112 (VSKVNGWIFGTLLCK). A disulfide bridge links cysteine 111 with cysteine 188. A helical transmembrane segment spans residues 113–133 (VVSLLKEVNFYSGILLLACIS). Residues 134–154 (VDRYLAIVHATRTLTQKRHLV) lie on the Cytoplasmic side of the membrane. Residues 155-175 (KFVCLSCWGLSMILSLPFFLF) form a helical membrane-spanning segment. Over 176–209 (RQAYHPKNSSPVCYEVLGNDTAKWRMVLRILPHT) the chain is Extracellular. Asparagine 194 is a glycosylation site (N-linked (GlcNAc...) asparagine). A helical membrane pass occupies residues 210 to 230 (FGFIVPLFVMLFCYGFALCTL). Residues 231–243 (FKAHMGQKHRAMR) lie on the Cytoplasmic side of the membrane. The chain crosses the membrane as a helical span at residues 244-264 (VIFAVVLIFLLCWLPYNLVLL). At 265-289 (ADTLMRTQLIKESCERRNDIGWALD) the chain is on the extracellular side. A helical transmembrane segment spans residues 290-310 (ATEILGFLHSCLNPIIYAFIG). Over 311–351 (QNFRHGFLKILAMHGLVSKEFLARHHVTSYTSSSVNVSSNL) the chain is Cytoplasmic.

This sequence belongs to the G-protein coupled receptor 1 family. Interacts with IL8. Interacts with GNAI2.

The protein localises to the cell membrane. Receptor to interleukin-8, which is a powerful neutrophils chemotactic factor. Binding of IL-8 to the receptor causes activation of neutrophils. This response is mediated via a G-protein that activates a phosphatidylinositol-calcium second messenger system. The polypeptide is C-X-C chemokine receptor type 1 (CXCR1) (Pongo pygmaeus (Bornean orangutan)).